Consider the following 159-residue polypeptide: Phosphopantetheine adenylyltransferase (159 aa).

Threonine 10 lines the substrate pocket. ATP contacts are provided by residues 10–11 (TF) and histidine 18. 3 residues coordinate substrate: lysine 42, leucine 74, and arginine 88. Residues 89–91 (GLR), glutamate 99, and 124–130 (YSFISSS) each bind ATP.

The protein belongs to the bacterial CoaD family. In terms of assembly, homohexamer. It depends on Mg(2+) as a cofactor.

The protein localises to the cytoplasm. The enzyme catalyses (R)-4'-phosphopantetheine + ATP + H(+) = 3'-dephospho-CoA + diphosphate. The protein operates within cofactor biosynthesis; coenzyme A biosynthesis; CoA from (R)-pantothenate: step 4/5. Its function is as follows. Reversibly transfers an adenylyl group from ATP to 4'-phosphopantetheine, yielding dephospho-CoA (dPCoA) and pyrophosphate. The protein is Phosphopantetheine adenylyltransferase of Campylobacter hominis (strain ATCC BAA-381 / DSM 21671 / CCUG 45161 / LMG 19568 / NCTC 13146 / CH001A).